The chain runs to 130 residues: Protein NrdI (130 aa).

Belongs to the NrdI family.

Probably involved in ribonucleotide reductase function. This Bacillus velezensis (strain DSM 23117 / BGSC 10A6 / LMG 26770 / FZB42) (Bacillus amyloliquefaciens subsp. plantarum) protein is Protein NrdI.